Here is a 513-residue protein sequence, read N- to C-terminus: Protein phosphatase 1H (513 aa).

A Phosphoserine modification is found at Ser-7. Residues 77–506 (ATGYAEVINA…DDISVYVIPL (430 aa)) enclose the PPM-type phosphatase domain. Residues 109–133 (TITSTPNRNSKRRSSLPNGEGLQLK) are disordered. At Thr-113 the chain carries Phosphothreonine. 2 positions are modified to phosphoserine: Ser-123 and Ser-210. Arg-212 is modified (omega-N-methylarginine). At Ser-220 the chain carries Phosphoserine. Thr-223 carries the post-translational modification Phosphothreonine. Ser-421 bears the Phosphoserine mark.

Belongs to the PP2C family.

Its subcellular location is the nucleus. It localises to the cytoplasm. The enzyme catalyses O-phospho-L-seryl-[protein] + H2O = L-seryl-[protein] + phosphate. The catalysed reaction is O-phospho-L-threonyl-[protein] + H2O = L-threonyl-[protein] + phosphate. Dephosphorylates CDKN1B at 'Thr-187', thus removing a signal for proteasomal degradation. This chain is Protein phosphatase 1H (Ppm1h), found in Mus musculus (Mouse).